A 434-amino-acid polypeptide reads, in one-letter code: MQVSVEATQGLERRLTISVPAEQIEKLVKDSLQREAKRARIPGFRPGKVPVTVINKRYGAAIRQDITGEVMQRNFIEAIIAEKLNPAGAPTFIPGSTDSEKFEFVATFEIYPEVELKGLDAIEVEQPKASVTDADVDSMIETLRKQHATYAAVEREAADGDKVKMNFVGSVDGEEFEGGKAEDFELQLGSGRMIPGFEAGILGHKAGEEFVIDVNFPEEYHAENLKGKAAKFAITLTEVQAANLPEVNDEFAALFGINEGGLEALKTEIRKNMNRELEQALKANVKEQVIAGLLANNDIELPKALIDGEVNVLRQQAMQRFGGQTANMPELPAELFTEQAARRVKIGLLLGEVIKTNELKAEDERVQGLIASMASAYEDPSEVIAYYNSNKELMQNMRNVALEEQAVEALLKSAKVTEKEVAFEEFMNKATGRA.

The region spanning 160-245 (GDKVKMNFVG…LTEVQAANLP (86 aa)) is the PPIase FKBP-type domain.

The protein belongs to the FKBP-type PPIase family. Tig subfamily.

The protein localises to the cytoplasm. The catalysed reaction is [protein]-peptidylproline (omega=180) = [protein]-peptidylproline (omega=0). Functionally, involved in protein export. Acts as a chaperone by maintaining the newly synthesized protein in an open conformation. Functions as a peptidyl-prolyl cis-trans isomerase. The protein is Trigger factor of Shewanella putrefaciens (strain CN-32 / ATCC BAA-453).